The sequence spans 400 residues: Tektin-B1 (400 aa).

Coiled-coil stretches lie at residues 35-81 (TRLS…AKAL), 236-294 (FALR…LENR), and 310-353 (GLVN…LELK).

The protein belongs to the tektin family. In terms of assembly, may form a heterodimer with tektin a or exist as a homodimer. As to expression, cilia and flagella.

The protein resides in the cytoplasm. It is found in the cytoskeleton. Its function is as follows. Structural component of ciliary and flagellar microtubules. The polypeptide is Tektin-B1 (Strongylocentrotus purpuratus (Purple sea urchin)).